The primary structure comprises 245 residues: Phosphoribosylaminoimidazole-succinocarboxamide synthase (245 aa).

The protein belongs to the SAICAR synthetase family.

It catalyses the reaction 5-amino-1-(5-phospho-D-ribosyl)imidazole-4-carboxylate + L-aspartate + ATP = (2S)-2-[5-amino-1-(5-phospho-beta-D-ribosyl)imidazole-4-carboxamido]succinate + ADP + phosphate + 2 H(+). It participates in purine metabolism; IMP biosynthesis via de novo pathway; 5-amino-1-(5-phospho-D-ribosyl)imidazole-4-carboxamide from 5-amino-1-(5-phospho-D-ribosyl)imidazole-4-carboxylate: step 1/2. This Trichormus variabilis (strain ATCC 29413 / PCC 7937) (Anabaena variabilis) protein is Phosphoribosylaminoimidazole-succinocarboxamide synthase.